A 342-amino-acid chain; its full sequence is Transmembrane protein 268 (342 aa).

2 helical membrane-spanning segments follow: residues A106 to F126 and A133 to F153. The tract at residues V245–P267 is disordered.

Interacts with ITGAM; this interaction inhibits ITGAM degradation via the endosome-lysosome pathway. Interacts with ITGB4; this interaction prevents ITGB4 degradation.

The protein localises to the cell membrane. Stabilizes cell surface expression of ITGAM and participates in the adhesion and migration of phagocytes during bacterial clearance. This is Transmembrane protein 268 from Mus musculus (Mouse).